The primary structure comprises 466 residues: Cell division protein FtsP (466 aa).

The tat-type signal signal peptide spans 1 to 28 (MNYSRRSLFKKTLIATALSALPATLLAA).

It belongs to the FtsP family. Predicted to be exported by the Tat system. The position of the signal peptide cleavage has not been experimentally proven.

The protein localises to the periplasm. Its function is as follows. Cell division protein that is required for growth during stress conditions. May be involved in protecting or stabilizing the divisomal assembly under conditions of stress. This Actinobacillus succinogenes (strain ATCC 55618 / DSM 22257 / CCUG 43843 / 130Z) protein is Cell division protein FtsP.